Here is a 425-residue protein sequence, read N- to C-terminus: Histone-binding protein RBBP4-B (425 aa).

Position 2 is an N-acetylalanine (alanine 2). WD repeat units follow at residues 32–125 (YDLV…NHEG), 126–175 (EVNR…RLRG), 176–223 (HQKE…KTIF), 225–270 (GHTA…HSVD), 271–314 (AHTA…HSFE), 315–371 (SHKD…FIHG), and 372–404 (GHTA…VWQM).

Belongs to the WD repeat RBAP46/RBAP48/MSI1 family. Binds directly to histone H4, probably via helix 1 of the histone fold, a region that is not accessible when histone H4 is in chromatin. Probably forms a large corepressor complex that contains ncor1, sin3a, hdac1-A and/or hdac1-B, hdac2, rbbp4-A and/or rbbp4-B and possibly rbbp7.

Its subcellular location is the nucleus. It localises to the chromosome. It is found in the telomere. Its function is as follows. Core histone-binding subunit that may target chromatin assembly factors, chromatin remodeling factors and histone deacetylases to their histone substrates in a manner that is regulated by nucleosomal DNA. Component of several complexes which regulate chromatin metabolism. In Xenopus laevis (African clawed frog), this protein is Histone-binding protein RBBP4-B (rbbp4-b).